Reading from the N-terminus, the 480-residue chain is Selenium-binding protein 3 (480 aa).

Residues Cys12 and Cys13 each coordinate selenite.

Belongs to the selenium-binding protein family. In terms of tissue distribution, expressed in young seedlings, mostly in roots.

The protein is Selenium-binding protein 3 (SBP3) of Arabidopsis thaliana (Mouse-ear cress).